The primary structure comprises 238 residues: Fish-egg lectin (238 aa).

5 repeat units span residues 1–34, 35–68, 69–106, 107–156, and 157–199. The segment at 1–199 is 5 X approximate tandem repeats; that stretch reads LDCTVIDGNL…TGVTRSKPDG (199 aa). Cystine bridges form between Cys-3-Cys-234, Cys-100-Cys-153, Cys-128-Cys-133, and Cys-208-Cys-226. Asn-27 carries an N-linked (GlcNAc...) asparagine glycan.

This sequence belongs to the tectonin family. In terms of tissue distribution, expressed in the eggs.

Its subcellular location is the secreted. Lipopolysaccharide-binding protein with a very low agglutinating activity for human A-type erythrocytes and interacts with both Gram-positive and Gram-negative bacteria. This is Fish-egg lectin from Cyprinus carpio (Common carp).